The following is a 70-amino-acid chain: uncharacterized protein (70 aa).

Its subcellular location is the plastid. It localises to the chloroplast. This is an uncharacterized protein from Mesostigma viride (Green alga).